A 250-amino-acid polypeptide reads, in one-letter code: Large ribosomal subunit protein uL13c (250 aa).

The N-terminal 47 residues, Met-1 to Ala-47, are a transit peptide targeting the chloroplast.

In terms of assembly, component of the chloroplast large ribosomal subunit (LSU). Mature 70S chloroplast ribosomes of higher plants consist of a small (30S) and a large (50S) subunit. The 30S small subunit contains 1 molecule of ribosomal RNA (16S rRNA) and 24 different proteins. The 50S large subunit contains 3 rRNA molecules (23S, 5S and 4.5S rRNA) and 33 different proteins.

Its subcellular location is the plastid. The protein resides in the chloroplast. Component of the chloroplast ribosome (chloro-ribosome), a dedicated translation machinery responsible for the synthesis of chloroplast genome-encoded proteins, including proteins of the transcription and translation machinery and components of the photosynthetic apparatus. The protein is Large ribosomal subunit protein uL13c (RPL13) of Spinacia oleracea (Spinach).